A 494-amino-acid polypeptide reads, in one-letter code: Alpha-amylase-related protein (494 aa).

The signal sequence occupies residues 1-20; sequence MIKFALALTLCLAGASLSLA. Pyrrolidone carboxylic acid is present on Gln-21. Cys-48 and Cys-104 are oxidised to a cystine. The Ca(2+) site is built by Asn-118, Gln-169, and Asp-178. The cysteines at positions 157 and 171 are disulfide-linked. Arg-206 is a binding site for chloride. Asp-208 serves as the catalytic Nucleophile. His-212 is a Ca(2+) binding site. The active-site Proton donor is the Glu-245. Residues Asn-308 and Arg-343 each contribute to the chloride site. Intrachain disulfides connect Cys-376-Cys-382, Cys-418-Cys-441, and Cys-448-Cys-460.

This sequence belongs to the glycosyl hydrolase 13 family. Monomer. Ca(2+) serves as cofactor. Chloride is required as a cofactor.

The protein resides in the secreted. It catalyses the reaction Endohydrolysis of (1-&gt;4)-alpha-D-glucosidic linkages in polysaccharides containing three or more (1-&gt;4)-alpha-linked D-glucose units.. The sequence is that of Alpha-amylase-related protein (Amyrel) from Drosophila auraria (Fruit fly).